Reading from the N-terminus, the 310-residue chain is Translocator protein BipD (310 aa).

2 coiled-coil regions span residues 127-171 and 250-299; these read DPIL…LQDY and DTAR…AIST.

The protein belongs to the invasin protein D family.

It is found in the secreted. Its function is as follows. Required for invasion of epithelial cells, as well as for survival within host cells, escape from endocytic vesicles and subsequent actin-tail formation. Probably regulates the secretion of effectors BipB and BipC and their final integration into the target cell membrane. This Burkholderia mallei (strain NCTC 10247) protein is Translocator protein BipD (bipD).